The chain runs to 182 residues: Peptidyl-tRNA hydrolase (182 aa).

Y14 is a binding site for tRNA. Catalysis depends on H19, which acts as the Proton acceptor. Residues F64, N66, and N112 each contribute to the tRNA site.

Belongs to the PTH family. In terms of assembly, monomer.

The protein localises to the cytoplasm. It catalyses the reaction an N-acyl-L-alpha-aminoacyl-tRNA + H2O = an N-acyl-L-amino acid + a tRNA + H(+). In terms of biological role, hydrolyzes ribosome-free peptidyl-tRNAs (with 1 or more amino acids incorporated), which drop off the ribosome during protein synthesis, or as a result of ribosome stalling. Its function is as follows. Catalyzes the release of premature peptidyl moieties from peptidyl-tRNA molecules trapped in stalled 50S ribosomal subunits, and thus maintains levels of free tRNAs and 50S ribosomes. The polypeptide is Peptidyl-tRNA hydrolase (Wolbachia pipientis wMel).